We begin with the raw amino-acid sequence, 317 residues long: Acetyl-coenzyme A carboxylase carboxyl transferase subunit alpha (317 aa).

The CoA carboxyltransferase C-terminal domain maps to 37 to 291 (KLQEKVDKLL…GNAIEDALDD (255 aa)).

The protein belongs to the AccA family. Acetyl-CoA carboxylase is a heterohexamer composed of biotin carboxyl carrier protein (AccB), biotin carboxylase (AccC) and two subunits each of ACCase subunit alpha (AccA) and ACCase subunit beta (AccD).

The protein localises to the cytoplasm. It catalyses the reaction N(6)-carboxybiotinyl-L-lysyl-[protein] + acetyl-CoA = N(6)-biotinyl-L-lysyl-[protein] + malonyl-CoA. It participates in lipid metabolism; malonyl-CoA biosynthesis; malonyl-CoA from acetyl-CoA: step 1/1. In terms of biological role, component of the acetyl coenzyme A carboxylase (ACC) complex. First, biotin carboxylase catalyzes the carboxylation of biotin on its carrier protein (BCCP) and then the CO(2) group is transferred by the carboxyltransferase to acetyl-CoA to form malonyl-CoA. This Rhodospirillum centenum (strain ATCC 51521 / SW) protein is Acetyl-coenzyme A carboxylase carboxyl transferase subunit alpha.